Consider the following 337-residue polypeptide: tRNA N6-adenosine threonylcarbamoyltransferase (337 aa).

2 residues coordinate Fe cation: H111 and H115. Substrate-binding positions include 134–138, D167, G180, and N272; that span reads LVSGG. D300 provides a ligand contact to Fe cation.

This sequence belongs to the KAE1 / TsaD family. Fe(2+) serves as cofactor.

It localises to the cytoplasm. It carries out the reaction L-threonylcarbamoyladenylate + adenosine(37) in tRNA = N(6)-L-threonylcarbamoyladenosine(37) in tRNA + AMP + H(+). Its function is as follows. Required for the formation of a threonylcarbamoyl group on adenosine at position 37 (t(6)A37) in tRNAs that read codons beginning with adenine. Is involved in the transfer of the threonylcarbamoyl moiety of threonylcarbamoyl-AMP (TC-AMP) to the N6 group of A37, together with TsaE and TsaB. TsaD likely plays a direct catalytic role in this reaction. The chain is tRNA N6-adenosine threonylcarbamoyltransferase from Pectobacterium atrosepticum (strain SCRI 1043 / ATCC BAA-672) (Erwinia carotovora subsp. atroseptica).